The sequence spans 615 residues: Cilia- and flagella-associated protein 52 (615 aa).

11 WD repeats span residues 54–98 (GHSD…LIHR), 101–142 (LHKV…AICG), 145–184 (CNTN…NKLR), 232–275 (GPAK…AGTK), 320–359 (AHND…ELLR), 362–401 (VPNL…IIFT), 405–444 (AHQK…QTLE), 449–488 (DHKG…RRTS), 490–529 (FANT…AIRI), 533–572 (SDLD…CYFV), and 575–614 (AHSG…TLAD).

It belongs to the CFAP52 family.

The protein localises to the cytoplasm. It localises to the cell projection. The protein resides in the cilium. It is found in the flagellum. Functionally, may play a role in cell growth and/or survival. In Chlamydomonas reinhardtii (Chlamydomonas smithii), this protein is Cilia- and flagella-associated protein 52.